The primary structure comprises 329 residues: Epoxide hydrolase (329 aa).

The AB hydrolase-1 domain maps to 35 to 308 (PAVLFCHGFP…DNVGHWVQHE (274 aa)). Catalysis depends on Asp-111, which acts as the Nucleophile. Tyr-242 acts as the Proton donor in catalysis. The active-site Proton acceptor is the His-303.

This sequence belongs to the AB hydrolase superfamily. Epoxide hydrolase family. Homodimer.

The enzyme catalyses an epoxide + H2O = an ethanediol. The catalysed reaction is (R)-styrene oxide + H2O = (R)-styrene glycol. It catalyses the reaction (S)-styrene oxide + H2O = (S)-styrene glycol. It carries out the reaction 3,4-epoxy-1-cyclohexene + H2O = cyclohex-3-ene-1,2-diol. Catalyzes the hydrolysis of various epoxides into diols. In vitro, shows the strongest activity toward aromatic and cyclic aliphatic epoxide compounds, since it shows strong activity toward (R)-styrene oxide, (S)-styrene oxide, and 3,4-epoxy-1-cyclohexene, but very weak activity toward (R)-epichlorohydrin, (S)-epichlorohydrin, and 1,2-epoxy-9-decene. The chain is Epoxide hydrolase from Caballeronia sordidicola (Burkholderia sordidicola).